Here is a 46-residue protein sequence, read N- to C-terminus: Defensin-like protein AX2 (46 aa).

4 disulfide bridges follow: cysteine 3/cysteine 46, cysteine 14/cysteine 34, cysteine 20/cysteine 40, and cysteine 24/cysteine 42.

Leaves and flowers.

Its function is as follows. Strong inhibiting activity against C.beticola and other filamentous fungi. Little or no effect against bacteria. The chain is Defensin-like protein AX2 from Beta vulgaris (Sugar beet).